We begin with the raw amino-acid sequence, 208 residues long: FMN-dependent NADH:quinone oxidoreductase 4 (208 aa).

It belongs to the azoreductase type 1 family. As to quaternary structure, homodimer. The cofactor is FMN.

The enzyme catalyses 2 a quinone + NADH + H(+) = 2 a 1,4-benzosemiquinone + NAD(+). It catalyses the reaction N,N-dimethyl-1,4-phenylenediamine + anthranilate + 2 NAD(+) = 2-(4-dimethylaminophenyl)diazenylbenzoate + 2 NADH + 2 H(+). Quinone reductase that provides resistance to thiol-specific stress caused by electrophilic quinones. Functionally, also exhibits azoreductase activity. Catalyzes the reductive cleavage of the azo bond in aromatic azo compounds to the corresponding amines. This is FMN-dependent NADH:quinone oxidoreductase 4 from Bacillus cereus (strain ZK / E33L).